Here is a 355-residue protein sequence, read N- to C-terminus: UDP-N-acetylglucosamine--N-acetylmuramyl-(pentapeptide) pyrophosphoryl-undecaprenol N-acetylglucosamine transferase (355 aa).

UDP-N-acetyl-alpha-D-glucosamine is bound by residues threonine 15 to glycine 17, asparagine 127, arginine 163, serine 191, isoleucine 244, alanine 263 to glutamate 268, and glutamine 288.

The protein belongs to the glycosyltransferase 28 family. MurG subfamily.

The protein resides in the cell inner membrane. The enzyme catalyses di-trans,octa-cis-undecaprenyl diphospho-N-acetyl-alpha-D-muramoyl-L-alanyl-D-glutamyl-meso-2,6-diaminopimeloyl-D-alanyl-D-alanine + UDP-N-acetyl-alpha-D-glucosamine = di-trans,octa-cis-undecaprenyl diphospho-[N-acetyl-alpha-D-glucosaminyl-(1-&gt;4)]-N-acetyl-alpha-D-muramoyl-L-alanyl-D-glutamyl-meso-2,6-diaminopimeloyl-D-alanyl-D-alanine + UDP + H(+). The protein operates within cell wall biogenesis; peptidoglycan biosynthesis. Cell wall formation. Catalyzes the transfer of a GlcNAc subunit on undecaprenyl-pyrophosphoryl-MurNAc-pentapeptide (lipid intermediate I) to form undecaprenyl-pyrophosphoryl-MurNAc-(pentapeptide)GlcNAc (lipid intermediate II). This Salmonella paratyphi A (strain ATCC 9150 / SARB42) protein is UDP-N-acetylglucosamine--N-acetylmuramyl-(pentapeptide) pyrophosphoryl-undecaprenol N-acetylglucosamine transferase.